Consider the following 764-residue polypeptide: Ribosomal protein S6 kinase alpha-6 (764 aa).

A disordered region spans residues 1-24; sequence MLPFAPVEDPWDQEDMEVFGSTSS. Residues 93–350 enclose the Protein kinase 1 domain; it reads FDLLKVLGQG…VEEVKRHAFF (258 aa). Residues 99–107 and Lys125 each bind ATP; that span reads LGQGSFGKV. Residue Asp218 is the Proton acceptor of the active site. A phosphoserine mark is found at Ser252, Ser392, and Ser409. The 70-residue stretch at 351–420 folds into the AGC-kinase C-terminal domain; that stretch reads ASIDWNKLYK…VATSIAEEYK (70 aa). Positions 446 to 706 constitute a Protein kinase 2 domain; that stretch reads YELKEDIGIG…VLKHPWITQR (261 aa). ATP is bound by residues 452–460 and Lys475; that span reads IGIGSYSVC. Asp563 serves as the catalytic Proton acceptor. Thr601 bears the Phosphothreonine mark.

It belongs to the protein kinase superfamily. AGC Ser/Thr protein kinase family. S6 kinase subfamily. Forms a complex with MAPK3/ERK1 but not with MAPK9 or MAPK14 in serum-starved cells. Mg(2+) serves as cofactor. Phosphorylated at Ser-252, Ser-392, and Ser-409 in serum-starved cells.

It is found in the cytoplasm. It localises to the cytosol. The protein localises to the nucleus. The catalysed reaction is L-seryl-[protein] + ATP = O-phospho-L-seryl-[protein] + ADP + H(+). The enzyme catalyses L-threonyl-[protein] + ATP = O-phospho-L-threonyl-[protein] + ADP + H(+). Constitutively activated by phosphorylation at Ser-252, Ser-392, and Ser-409 in serum-starved cells. Does not require growth factor stimulation for significant kinase activity. Functionally, constitutively active serine/threonine-protein kinase that exhibits growth-factor-independent kinase activity and that may participate in p53/TP53-dependent cell growth arrest signaling and play an inhibitory role during embryogenesis. In Mus musculus (Mouse), this protein is Ribosomal protein S6 kinase alpha-6 (Rps6ka6).